The following is a 351-amino-acid chain: Uroporphyrinogen decarboxylase (351 aa).

Residues 25 to 29, D74, Y151, S206, and H325 each bind substrate; that span reads RQAGR.

This sequence belongs to the uroporphyrinogen decarboxylase family. Homodimer.

Its subcellular location is the cytoplasm. It carries out the reaction uroporphyrinogen III + 4 H(+) = coproporphyrinogen III + 4 CO2. The protein operates within porphyrin-containing compound metabolism; protoporphyrin-IX biosynthesis; coproporphyrinogen-III from 5-aminolevulinate: step 4/4. Its function is as follows. Catalyzes the decarboxylation of four acetate groups of uroporphyrinogen-III to yield coproporphyrinogen-III. The polypeptide is Uroporphyrinogen decarboxylase (Chlorobium phaeobacteroides (strain DSM 266 / SMG 266 / 2430)).